Consider the following 477-residue polypeptide: UDP-N-acetylmuramate--L-alanine ligase (477 aa).

125-131 (GTHGKTT) provides a ligand contact to ATP.

It belongs to the MurCDEF family.

The protein resides in the cytoplasm. It carries out the reaction UDP-N-acetyl-alpha-D-muramate + L-alanine + ATP = UDP-N-acetyl-alpha-D-muramoyl-L-alanine + ADP + phosphate + H(+). Its pathway is cell wall biogenesis; peptidoglycan biosynthesis. Functionally, cell wall formation. This chain is UDP-N-acetylmuramate--L-alanine ligase, found in Acidothermus cellulolyticus (strain ATCC 43068 / DSM 8971 / 11B).